A 211-amino-acid chain; its full sequence is Methylthioribulose-1-phosphate dehydratase (211 aa).

Zn(2+)-binding residues include H94 and H96.

This sequence belongs to the aldolase class II family. MtnB subfamily. Zn(2+) serves as cofactor.

The enzyme catalyses 5-(methylsulfanyl)-D-ribulose 1-phosphate = 5-methylsulfanyl-2,3-dioxopentyl phosphate + H2O. It functions in the pathway amino-acid biosynthesis; L-methionine biosynthesis via salvage pathway; L-methionine from S-methyl-5-thio-alpha-D-ribose 1-phosphate: step 2/6. Its function is as follows. Catalyzes the dehydration of methylthioribulose-1-phosphate (MTRu-1-P) into 2,3-diketo-5-methylthiopentyl-1-phosphate (DK-MTP-1-P). The sequence is that of Methylthioribulose-1-phosphate dehydratase from Pseudoalteromonas translucida (strain TAC 125).